We begin with the raw amino-acid sequence, 152 residues long: Large ribosomal subunit protein bL9 (152 aa).

Belongs to the bacterial ribosomal protein bL9 family.

Its function is as follows. Binds to the 23S rRNA. This is Large ribosomal subunit protein bL9 from Mycobacterium avium (strain 104).